Reading from the N-terminus, the 162-residue chain is MDEKDLAAQPEEAGQDPRLPGPHEDPRRQEGAEAQAAEGPLAPHAQGERLKRPPPAPGGKLVSLKGDRAFQRLRKGKAGRGRYVSVKWLPAPELRVGIVVSKKVGKAVVRNKVKRRLREILRRLHLPKAHLLVVASPEAREASYVELFQDVARALKKSGLIQ.

Positions 1–67 (MDEKDLAAQP…GGKLVSLKGD (67 aa)) are disordered. The span at 21 to 31 (GPHEDPRRQEG) shows a compositional bias: basic and acidic residues.

Belongs to the RnpA family. In terms of assembly, consists of a catalytic RNA component (M1 or rnpB) and a protein subunit.

It catalyses the reaction Endonucleolytic cleavage of RNA, removing 5'-extranucleotides from tRNA precursor.. Its function is as follows. RNaseP catalyzes the removal of the 5'-leader sequence from pre-tRNA to produce the mature 5'-terminus. It can also cleave other RNA substrates such as 4.5S RNA. The protein component plays an auxiliary but essential role in vivo by binding to the 5'-leader sequence and broadening the substrate specificity of the ribozyme. The protein is Ribonuclease P protein component of Thermus brockianus.